An 862-amino-acid chain; its full sequence is Protein argonaute-2 (862 aa).

The region spanning 232–351 (PVIEFMCEVL…LPLEVCNIVA (120 aa)) is the PAZ domain. Interaction with guide RNA regions lie at residues 314-319 (YFKDRH) and 527-569 (GKTP…LCLK). One can recognise a Piwi domain in the interval 520–821 (LVVVILPGKT…VAFRARYHLV (302 aa)). Residues 590-593 (FQQP) form an interaction with GW182 family members region. Asp-600 is a binding site for a divalent metal cation. The interval 653-663 (LIQFYKSTRFK) is interaction with GW182 family members. Residue Asp-672 participates in a divalent metal cation binding. Interaction with guide RNA stretches follow at residues 712-713 (KR), 756-764 (HAGIQGTSR), and 793-815 (YVRCTRSVSIPAPAYYAHLVAFR). His-810 lines the a divalent metal cation pocket. A disordered region spans residues 825–847 (HDSAEGSHTSGQSNGRDQQALAK). Residues 830–841 (GSHTSGQSNGRD) show a composition bias toward polar residues.

This sequence belongs to the argonaute family. Ago subfamily. As to quaternary structure, component of the RISC loading complex (RLC), or micro-RNA (miRNA) loading complex (miRLC), which is composed of dicer1, ago2 and tarbp2. Note that the trimeric RLC/miRLC is also referred to as RISC. Requires Mg(2+) as cofactor. Mn(2+) serves as cofactor.

It is found in the cytoplasm. Its subcellular location is the P-body. The enzyme catalyses Endonucleolytic cleavage to 5'-phosphomonoester.. Its function is as follows. Required for RNA-mediated gene silencing (RNAi) by the RNA-induced silencing complex (RISC). The 'minimal RISC' appears to include ago2 bound to a short guide RNA such as a microRNA (miRNA) or short interfering RNA (siRNA). These guide RNAs direct RISC to complementary mRNAs that are targets for RISC-mediated gene silencing. The precise mechanism of gene silencing depends on the degree of complementarity between the miRNA or siRNA and its target. Binding of RISC to a perfectly complementary mRNA generally results in silencing due to endonucleolytic cleavage of the mRNA specifically by ago2. Binding of RISC to a partially complementary mRNA results in silencing through inhibition of translation, and this is independent of endonuclease activity. The inhibition of translational initiation leads to the accumulation of the affected mRNA in cytoplasmic processing bodies (P-bodies), where mRNA degradation may subsequently occur. The sequence is that of Protein argonaute-2 (ago2) from Xenopus laevis (African clawed frog).